Consider the following 409-residue polypeptide: Elongation factor Tu (409 aa).

In terms of domain architecture, tr-type G spans 10–214 (KPHVNIGTIG…AVDSYIPTPE (205 aa)). The segment at 19–26 (GHVDHGKT) is G1. GTP is bound at residue 19–26 (GHVDHGKT). T26 contributes to the Mg(2+) binding site. The tract at residues 60–64 (GITIN) is G2. The interval 81–84 (DCPG) is G3. GTP is bound by residues 81–85 (DCPGH) and 136–139 (NKKD). Positions 136–139 (NKKD) are G4. The tract at residues 174 to 176 (SAK) is G5.

It belongs to the TRAFAC class translation factor GTPase superfamily. Classic translation factor GTPase family. EF-Tu/EF-1A subfamily. As to quaternary structure, monomer.

It is found in the cytoplasm. It carries out the reaction GTP + H2O = GDP + phosphate + H(+). In terms of biological role, GTP hydrolase that promotes the GTP-dependent binding of aminoacyl-tRNA to the A-site of ribosomes during protein biosynthesis. The polypeptide is Elongation factor Tu (Microcystis aeruginosa (strain NIES-843 / IAM M-2473)).